A 154-amino-acid chain; its full sequence is Protein X (154 aa).

Residues 68-117 are mitochondrial targeting sequence; sequence PCALRFTSARRMETTVNAHRNLPKVLHKRTLGLSVMSTTDLEAYFKDCVF.

The protein belongs to the orthohepadnavirus protein X family. In terms of assembly, may form homodimer. May interact with host CEBPA, CFLAR, CREB1, DDB1, E4F1, HBXIP, HSPD1/HSP60, NFKBIA, POLR2E and SMAD4. Interacts with host SMC5-SMC6 complex and induces its degradation. Interacts with host TRPC4AP; leading to prevent ubiquitination of TRPC4AP. Interacts with host PLSCR1; this interaction promotes ubiquitination and degradation of HBx and impairs HBx-mediated cell proliferation. A fraction may be phosphorylated in insect cells and HepG2 cells, a human hepatoblastoma cell line. Phosphorylated in vitro by host protein kinase C or mitogen-activated protein kinase. N-acetylated in insect cells.

It is found in the host cytoplasm. The protein resides in the host nucleus. The protein localises to the host mitochondrion. Its function is as follows. Multifunctional protein that plays a role in silencing host antiviral defenses and promoting viral transcription. Does not seem to be essential for HBV infection. May be directly involved in development of cirrhosis and liver cancer (hepatocellular carcinoma). Most of cytosolic activities involve modulation of cytosolic calcium. The effect on apoptosis is controversial depending on the cell types in which the studies have been conducted. May induce apoptosis by localizing in mitochondria and causing loss of mitochondrial membrane potential. May also modulate apoptosis by binding host CFLAR, a key regulator of the death-inducing signaling complex (DISC). Promotes viral transcription by using the host E3 ubiquitin ligase DDB1 to target the SMC5-SMC6 complex to proteasomal degradation. This host complex would otherwise bind to viral episomal DNA, and prevents its transcription. Moderately stimulates transcription of many different viral and cellular transcription elements. Promoters and enhancers stimulated by HBx contain DNA binding sites for NF-kappa-B, AP-1, AP-2, c-EBP, ATF/CREB, or the calcium-activated factor NF-AT. The sequence is that of Protein X from Hepatitis B virus genotype B1 (isolate Japan/Yamagata-2/1998) (HBV-B).